The chain runs to 286 residues: Bifunctional protein FolD (286 aa).

NADP(+) contacts are provided by residues 165–167 (GRS), serine 190, and valine 231.

It belongs to the tetrahydrofolate dehydrogenase/cyclohydrolase family. In terms of assembly, homodimer.

It catalyses the reaction (6R)-5,10-methylene-5,6,7,8-tetrahydrofolate + NADP(+) = (6R)-5,10-methenyltetrahydrofolate + NADPH. The enzyme catalyses (6R)-5,10-methenyltetrahydrofolate + H2O = (6R)-10-formyltetrahydrofolate + H(+). It functions in the pathway one-carbon metabolism; tetrahydrofolate interconversion. Its function is as follows. Catalyzes the oxidation of 5,10-methylenetetrahydrofolate to 5,10-methenyltetrahydrofolate and then the hydrolysis of 5,10-methenyltetrahydrofolate to 10-formyltetrahydrofolate. The polypeptide is Bifunctional protein FolD (Bacillus cereus (strain AH187)).